We begin with the raw amino-acid sequence, 381 residues long: Probable 26S proteasome regulatory subunit rpn9 (381 aa).

The PCI domain maps to 177-343 (QYYRHCLLYL…QIVTISSVQS (167 aa)).

This sequence belongs to the proteasome subunit S11 family.

Its function is as follows. Acts as a regulatory subunit of the 26S proteasome which is involved in the ATP-dependent degradation of ubiquitinated proteins. The sequence is that of Probable 26S proteasome regulatory subunit rpn9 (rpn9) from Schizosaccharomyces pombe (strain 972 / ATCC 24843) (Fission yeast).